Reading from the N-terminus, the 133-residue chain is Norrin (133 aa).

The signal sequence occupies residues 1–24 (MRKHVLAASFSMLSLLVIMGDTDS). Disulfide bonds link C39/C96, C55/C110, C65/C126, and C69/C128. In terms of domain architecture, CTCK spans 39-132 (CMRHHYVDSI…ILSCHCEECN (94 aa)).

In terms of assembly, homodimer; disulfide-linked. Component of a complex, at least composed of TSPAN12, FZD4, LRP5/6 and norrin (NDP). Binds FZD4 with high affinity. Interacts with LRP6 (via Beta-propellers 1 and 2). In terms of tissue distribution, expressed in the outer nuclear, inner nuclear and ganglion cell layers of the retina, and in fetal and adult brain.

Its subcellular location is the secreted. Activates the canonical Wnt signaling pathway through FZD4 and LRP5 coreceptor. Plays a central role in retinal vascularization by acting as a ligand for FZD4 that signals via stabilizing beta-catenin (CTNNB1) and activating LEF/TCF-mediated transcriptional programs. Acts in concert with TSPAN12 to activate FZD4 independently of the Wnt-dependent activation of FZD4, suggesting the existence of a Wnt-independent signaling that also promote accumulation the beta-catenin (CTNNB1). May be involved in a pathway that regulates neural cell differentiation and proliferation. Possible role in neuroectodermal cell-cell interaction. The chain is Norrin (NDP) from Homo sapiens (Human).